The primary structure comprises 431 residues: Keratin, type I cytoskeletal 40 (431 aa).

Residues 1–89 (MASEGSPDCC…CEEGTFNSNE (89 aa)) are head. The IF rod domain maps to 89 to 400 (EKETMQFLND…GLLEKEDSRL (312 aa)). The coil 1A stretch occupies residues 90–124 (KETMQFLNDRLASYLERVRSLEENNAELECRIREQ). The interval 125–135 (CEPDATPVCPD) is linker 1. The tract at residues 136 to 236 (YQRYFDTIEE…HEEEVNLLRE (101 aa)) is coil 1B. A linker 12 region spans residues 237 to 252 (QLGDRLNVELDTAPTV). The segment at 253–396 (DLNKVLDEMR…NTYRGLLEKE (144 aa)) is coil 2. Residues 397 to 431 (DSRLPCNPGSTASISNSACEPCSAYVICTVENCCA) form a tail region.

The protein belongs to the intermediate filament family. As to quaternary structure, heterotetramer of two type I and two type II keratins.

In terms of biological role, may play a role in late hair differentiation. The chain is Keratin, type I cytoskeletal 40 (Krt40) from Rattus norvegicus (Rat).